The following is an 86-amino-acid chain: Protein Vpu (86 aa).

Residues 1–12 (MLELIGRIDYRL) are Extracellular-facing. A helical transmembrane segment spans residues 13–33 (GVGALIVALIIVIIVWTIAYI). The Cytoplasmic portion of the chain corresponds to 34-86 (EYRKLVRQRRIDWLVKRIKERAEDSGNESGGDTEELETMVDMGHLRLLDGNDL). Phosphoserine; by host CK2 occurs at positions 58 and 62.

It belongs to the HIV-1 VPU protein family. In terms of assembly, homopentamer. Interacts with host CD4 and BRTC; these interactions induce proteasomal degradation of CD4. Interacts with host BST2; this interaction leads to the degradation of host BST2. Interacts with host FBXW11. Interacts with host AP1M1; this interaction plays a role in the mistrafficking and subsequent degradation of host BST2. Interacts with host RANBP2; this interaction allows Vpu to down-regulate host BLM sumoylation. In terms of processing, phosphorylated by host CK2. This phosphorylation is necessary for interaction with human BTRC and degradation of CD4.

The protein localises to the host membrane. Ion channel activity is inhibited by hexamethylene amiloride in vitro. In terms of biological role, enhances virion budding, by targeting human CD4 and Tetherin/BST2 to proteasome degradation. Degradation of CD4 prevents any unwanted premature interactions between viral Env and its host receptor CD4 in the endoplasmic reticulum. Degradation of antiretroviral protein Tetherin/BST2 is important for virion budding, as BST2 tethers new viral particles to the host cell membrane. Mechanistically, Vpu bridges either CD4 or BST2 to BTRC, a substrate recognition subunit of the Skp1/Cullin/F-box protein E3 ubiquitin ligase, induces their ubiquitination and subsequent proteasomal degradation. The alteration of the E3 ligase specificity by Vpu seems to promote the degradation of host IKBKB, leading to NF-kappa-B down-regulation and subsequent apoptosis. Acts as a viroporin that forms an oligomeric ion channel in membranes. Modulates the host DNA repair mechanisms to promote degradation of nuclear viral cDNA in cells that are already productively infected in order to suppress immune sensing and proviral hyper-integration (superinfection). Manipulates PML-NBs and modulates SUMOylation of host BLM protein thereby enhancing its DNA-end processing activity toward viral unintegrated linear DNA. Also inhibits RAD52-mediated homologous repair of viral cDNA, preventing the generation of dead-end circular forms of single copies of the long terminal repeat and permitting sustained nucleolytic attack. The chain is Protein Vpu from Homo sapiens (Human).